The chain runs to 193 residues: uncharacterized protein (193 aa).

Residues methionine 1–tyrosine 84 form a disordered region. The segment covering serine 43–asparagine 78 has biased composition (basic residues).

It belongs to the IIV-6 378R family.

This is an uncharacterized protein from Invertebrate iridescent virus 6 (IIV-6).